Consider the following 634-residue polypeptide: Phosphatase and actin regulator 2 (634 aa).

4 disordered regions span residues 1–32 (MDNAVDGLDKASIANSDGPTAGSQTPPFKRKG), 84–344 (LPDQ…PLED), 412–471 (PQLL…ALAS), and 485–508 (NRPSKKELEDKNILQRTSEEERQE). Asp-2 is lipidated: N-myristoyl glycine. Positions 13 to 26 (IANSDGPTAGSQTP) are enriched in polar residues. Residue Ser-16 is modified to Phosphoserine. Residue Thr-25 is modified to Phosphothreonine. The stretch at 60–85 (AVLERKISTRQSREELIRRGVLKELP) is one RPEL 1 repeat. 2 stretches are compositionally biased toward basic and acidic residues: residues 108–120 (ESTREENVVKSEE) and 137–147 (EDKKENTENHS). The span at 153 to 162 (PALPPSAPPK) shows a compositional bias: pro residues. Composition is skewed to low complexity over residues 231-247 (GSKASASPSTSSTSSRP) and 276-290 (TSHLSSDTTTSGTSD). A compositionally biased stretch (basic and acidic residues) spans 291–304 (LKGEPAETRVESFK). Pro residues predominate over residues 324 to 341 (VPPPPVAPAPSPLAPPLP). Ser-423 carries the post-translational modification Phosphoserine. The span at 452-464 (TDDEDEDEDEDGS) shows a compositional bias: acidic residues. RPEL repeat units follow at residues 477-502 (DTLAIKLGNRPSKKELEDKNILQRTS), 515-540 (TKLVRRLSQRPTTEELEQRNILKQKN), and 553-578 (RRLSRKLSLRPTVAELQARRILRFNE). Over residues 488 to 508 (SKKELEDKNILQRTSEEERQE) the composition is skewed to basic and acidic residues. Residues Ser-522 and Ser-560 each carry the phosphoserine modification.

It belongs to the phosphatase and actin regulator family. In terms of assembly, binds PPP1CA and actin.

It localises to the membrane. This chain is Phosphatase and actin regulator 2 (PHACTR2), found in Homo sapiens (Human).